Reading from the N-terminus, the 147-residue chain is MADFDAVLKCWGPVEADYTTMGGLVLTRLFKEHPETQKLFPKFAGIAQADIAGNAAISAHGATVLKKLGELLKAKGSHAAILKPLANSHATKHKIPINNFKLISEVLVKVMHEKAGLDAGGQTALRNVMGIIIADLEANYKELGFSG.

At A2 the chain carries N-acetylalanine. The Globin domain occupies 2–141; that stretch reads ADFDAVLKCW…IIADLEANYK (140 aa). Nitrite is bound at residue H60. H60 contacts O2. H89 serves as a coordination point for heme b.

The protein belongs to the globin family. Monomeric.

The protein localises to the cytoplasm. It localises to the sarcoplasm. It carries out the reaction Fe(III)-heme b-[protein] + nitric oxide + H2O = Fe(II)-heme b-[protein] + nitrite + 2 H(+). The catalysed reaction is H2O2 + AH2 = A + 2 H2O. In terms of biological role, monomeric heme protein which primary function is to store oxygen and facilitate its diffusion within muscle tissues. Reversibly binds oxygen through a pentacoordinated heme iron and enables its timely and efficient release as needed during periods of heightened demand. Depending on the oxidative conditions of tissues and cells, and in addition to its ability to bind oxygen, it also has a nitrite reductase activity whereby it regulates the production of bioactive nitric oxide. Under stress conditions, like hypoxia and anoxia, it also protects cells against reactive oxygen species thanks to its pseudoperoxidase activity. This is Myoglobin (mb) from Thunnus albacares (Yellowfin tuna).